We begin with the raw amino-acid sequence, 69 residues long: Large ribosomal subunit protein bL31 (69 aa).

The Zn(2+) site is built by Cys-16, Cys-18, Cys-37, and Cys-40.

Belongs to the bacterial ribosomal protein bL31 family. Type A subfamily. In terms of assembly, part of the 50S ribosomal subunit. Zn(2+) serves as cofactor.

Binds the 23S rRNA. This chain is Large ribosomal subunit protein bL31, found in Buchnera aphidicola subsp. Cinara cedri (strain Cc).